The chain runs to 344 residues: Anthranilate phosphoribosyltransferase (344 aa).

Residues glycine 80, 83-84, threonine 88, 90-93, 108-116, and serine 120 each bind 5-phospho-alpha-D-ribose 1-diphosphate; these read GD, NVST, and KHGNRSVSS. Glycine 80 is an anthranilate binding site. Serine 92 contributes to the Mg(2+) binding site. Asparagine 111 is a binding site for anthranilate. Anthranilate is bound at residue arginine 166. Residues aspartate 225 and glutamate 226 each coordinate Mg(2+).

This sequence belongs to the anthranilate phosphoribosyltransferase family. In terms of assembly, homodimer. Mg(2+) is required as a cofactor.

It carries out the reaction N-(5-phospho-beta-D-ribosyl)anthranilate + diphosphate = 5-phospho-alpha-D-ribose 1-diphosphate + anthranilate. The protein operates within amino-acid biosynthesis; L-tryptophan biosynthesis; L-tryptophan from chorismate: step 2/5. Functionally, catalyzes the transfer of the phosphoribosyl group of 5-phosphorylribose-1-pyrophosphate (PRPP) to anthranilate to yield N-(5'-phosphoribosyl)-anthranilate (PRA). This chain is Anthranilate phosphoribosyltransferase, found in Legionella pneumophila (strain Lens).